The sequence spans 462 residues: Probable protein phosphatase 2C 1 (462 aa).

Residues 60–362 (SSCIFTQQGR…DDCAVVCLFL (303 aa)) enclose the PPM-type phosphatase domain. Mn(2+) is bound by residues Asp95, Gly96, Asp307, and Asp353. 2 disordered regions span residues 369–394 (ETSDNEEQCFSSATNAVESDESQGAE) and 421–443 (EADNAEKEKTREGEQNWSGLEGV). Positions 376 to 385 (QCFSSATNAV) are enriched in polar residues. Positions 424-434 (NAEKEKTREGE) are enriched in basic and acidic residues.

The protein belongs to the PP2C family. As to quaternary structure, interacts with GCN5. Requires Mg(2+) as cofactor. It depends on Mn(2+) as a cofactor.

The enzyme catalyses O-phospho-L-seryl-[protein] + H2O = L-seryl-[protein] + phosphate. It catalyses the reaction O-phospho-L-threonyl-[protein] + H2O = L-threonyl-[protein] + phosphate. Its function is as follows. May act as negative regulator of GCN5. This chain is Probable protein phosphatase 2C 1 (PPC6-6), found in Arabidopsis thaliana (Mouse-ear cress).